A 447-amino-acid polypeptide reads, in one-letter code: Phospholipase A(1) LCAT3 (447 aa).

S177 acts as the Acyl-ester intermediate in catalysis. Active-site charge relay system residues include D384 and H409.

Belongs to the AB hydrolase superfamily. Lipase family.

Its subcellular location is the microsome membrane. It catalyses the reaction a 1,2-diacyl-sn-glycero-3-phosphocholine + H2O = a 2-acyl-sn-glycero-3-phosphocholine + a fatty acid + H(+). Hydrolyzes the sn-1 acylester bond of phospholipids. Phosphatidylcholine, phosphatidylethanolamine and phosphatidic acid can be used as substrates. Weak activity with lysophosphatidylcholine and no activity with tripalmitoylglycerol and cholesteryl oleate. Seems to have a preference for unsaturated fatty acids at the sn-1 position. The protein is Phospholipase A(1) LCAT3 (LCAT3) of Arabidopsis thaliana (Mouse-ear cress).